The primary structure comprises 197 residues: Imidazoleglycerol-phosphate dehydratase (197 aa).

The protein belongs to the imidazoleglycerol-phosphate dehydratase family.

The protein localises to the cytoplasm. The enzyme catalyses D-erythro-1-(imidazol-4-yl)glycerol 3-phosphate = 3-(imidazol-4-yl)-2-oxopropyl phosphate + H2O. It functions in the pathway amino-acid biosynthesis; L-histidine biosynthesis; L-histidine from 5-phospho-alpha-D-ribose 1-diphosphate: step 6/9. The chain is Imidazoleglycerol-phosphate dehydratase from Pseudomonas fluorescens (strain ATCC BAA-477 / NRRL B-23932 / Pf-5).